The following is a 599-amino-acid chain: Sulfite reductase [NADPH] flavoprotein alpha-component (599 aa).

The 139-residue stretch at 64–202 (ITIISASQTG…AASEWRARVV (139 aa)) folds into the Flavodoxin-like domain. FMN-binding positions include 70 to 75 (SQTGNA), 117 to 120 (STQG), and 153 to 162 (LGDSSYEFFC). The FAD-binding FR-type domain occupies 234–448 (DAPLVASLSV…IEHNDNFRLP (215 aa)). Residues Thr-322, Ala-356, 386-389 (RLYS), 404-406 (TVG), Tyr-410, and 419-422 (GGAS) each bind FAD. Residues 519 to 520 (SR), 525 to 529 (KVYVQ), and Asp-561 contribute to the NADP(+) site. FAD is bound at residue Tyr-599.

This sequence belongs to the NADPH-dependent sulphite reductase flavoprotein subunit CysJ family. It in the N-terminal section; belongs to the flavodoxin family. The protein in the C-terminal section; belongs to the flavoprotein pyridine nucleotide cytochrome reductase family. As to quaternary structure, alpha(8)-beta(8). The alpha component is a flavoprotein, the beta component is a hemoprotein. FAD is required as a cofactor. FMN serves as cofactor.

The catalysed reaction is hydrogen sulfide + 3 NADP(+) + 3 H2O = sulfite + 3 NADPH + 4 H(+). The protein operates within sulfur metabolism; hydrogen sulfide biosynthesis; hydrogen sulfide from sulfite (NADPH route): step 1/1. Component of the sulfite reductase complex that catalyzes the 6-electron reduction of sulfite to sulfide. This is one of several activities required for the biosynthesis of L-cysteine from sulfate. The flavoprotein component catalyzes the electron flow from NADPH -&gt; FAD -&gt; FMN to the hemoprotein component. The chain is Sulfite reductase [NADPH] flavoprotein alpha-component from Escherichia coli (strain ATCC 8739 / DSM 1576 / NBRC 3972 / NCIMB 8545 / WDCM 00012 / Crooks).